The chain runs to 263 residues: Undecaprenyl-diphosphatase (263 aa).

Helical transmembrane passes span 1 to 21 (MSYL…FLPI), 41 to 61 (FTKA…LVLY), 69 to 89 (WGFY…GFVV), 96 to 116 (LMGS…ILIW), 147 to 167 (AIAM…GLTL), 177 to 197 (FSFF…LLKI), 208 to 228 (LLLV…KFFI), and 238 to 258 (GFGY…YTGH).

The protein belongs to the UppP family.

The protein resides in the cell inner membrane. The enzyme catalyses di-trans,octa-cis-undecaprenyl diphosphate + H2O = di-trans,octa-cis-undecaprenyl phosphate + phosphate + H(+). Catalyzes the dephosphorylation of undecaprenyl diphosphate (UPP). Confers resistance to bacitracin. The protein is Undecaprenyl-diphosphatase of Bdellovibrio bacteriovorus (strain ATCC 15356 / DSM 50701 / NCIMB 9529 / HD100).